Reading from the N-terminus, the 181-residue chain is MFGLKQFYQNEVKVKLAQELDIKNPMLLPKLEKIVISVGAGAHAKDMKIMQNIAQTISLIAGQKAVITKAKKSVAGFKIREGMAVGAKVTLRNKRMYNFLEKLIVISLPRVKDFRGISRNGFDGRGNYTFGINEQLIFPEVVYDDIMVSHGMNITMVTSTDNDKEAFKLLELLGLPFAKVR.

Belongs to the universal ribosomal protein uL5 family. Part of the 50S ribosomal subunit; part of the 5S rRNA/L5/L18/L25 subcomplex. Contacts the 5S rRNA and the P site tRNA. Forms a bridge to the 30S subunit in the 70S ribosome.

This is one of the proteins that bind and probably mediate the attachment of the 5S RNA into the large ribosomal subunit, where it forms part of the central protuberance. In the 70S ribosome it contacts protein S13 of the 30S subunit (bridge B1b), connecting the 2 subunits; this bridge is implicated in subunit movement. Contacts the P site tRNA; the 5S rRNA and some of its associated proteins might help stabilize positioning of ribosome-bound tRNAs. The protein is Large ribosomal subunit protein uL5 of Helicobacter acinonychis (strain Sheeba).